Reading from the N-terminus, the 200-residue chain is Membrane-spanning 4-domains subfamily A member 5 (200 aa).

Residues 1–52 are Cytoplasmic-facing; that stretch reads MDSSTAHSPVFLVFPPEITASEYESTELSATTFSTQSPLQKLFARKMKILGT. A helical membrane pass occupies residues 53–73; sequence IQILFGIMTFSFGVIFLFTLL. Residues 74–80 are Extracellular-facing; that stretch reads KPYPRFP. Residues 81 to 101 form a helical membrane-spanning segment; it reads FIFLSGYPFWGSVLFINSGAF. Topologically, residues 102 to 120 are cytoplasmic; that stretch reads LIAVKRKTTETLIILSRIM. Residues 121 to 141 form a helical membrane-spanning segment; sequence NFLSALGAIAGIILLTFGFIL. The Extracellular portion of the chain corresponds to 142 to 159; it reads DQNYICGYSHQNSQCKAV. A helical membrane pass occupies residues 160–180; sequence TVLFLGILITLMTFSIIELFI. Over 181 to 200 the chain is Cytoplasmic; the sequence is SLPFSILGCHSEDCDCEQCC.

It belongs to the MS4A family. As to expression, expressed at high level in the testis. Detected also in the pancreas, heart and in the brain.

Its subcellular location is the membrane. Its function is as follows. May be involved in signal transduction as a component of a multimeric receptor complex. The sequence is that of Membrane-spanning 4-domains subfamily A member 5 (MS4A5) from Homo sapiens (Human).